A 157-amino-acid chain; its full sequence is UPF0225 protein PA1039 (157 aa).

This sequence belongs to the UPF0225 family.

The chain is UPF0225 protein PA1039 from Pseudomonas aeruginosa (strain ATCC 15692 / DSM 22644 / CIP 104116 / JCM 14847 / LMG 12228 / 1C / PRS 101 / PAO1).